A 75-amino-acid chain; its full sequence is Small ribosomal subunit protein bS18 (75 aa).

This sequence belongs to the bacterial ribosomal protein bS18 family. In terms of assembly, part of the 30S ribosomal subunit. Forms a tight heterodimer with protein bS6.

Functionally, binds as a heterodimer with protein bS6 to the central domain of the 16S rRNA, where it helps stabilize the platform of the 30S subunit. The chain is Small ribosomal subunit protein bS18 from Teredinibacter turnerae (strain ATCC 39867 / T7901).